The chain runs to 31 residues: Phallacidin proprotein 1 (31 aa).

Residues 1-10 constitute a propeptide that is removed on maturation; the sequence is MSDINATRLP. The cyclopeptide (Ala-Pro) cross-link spans 11–17; sequence AWLVDCP. The segment at residues 12-16 is a cross-link (2'-cysteinyl-6'-hydroxytryptophan sulfoxide (Trp-Cys)); it reads WLVDC. A propeptide spanning residues 18 to 31 is cleaved from the precursor; sequence CVGDDVNRLLTRGE.

It belongs to the MSDIN fungal toxin family. In terms of processing, processed by the macrocyclase-peptidase enzyme POPB to yield a toxic cyclic heptapeptide. POPB first removes 10 residues from the N-terminus. Conformational trapping of the remaining peptide forces the enzyme to release this intermediate rather than proceed to macrocyclization. The enzyme rebinds the remaining peptide in a different conformation and catalyzes macrocyclization of the N-terminal 7 residues.

Functionally, major toxin that belongs to the bicyclic heptapeptides called phallotoxins. Although structurally related to amatoxins, phallotoxins have a different mode of action, which is the stabilization of F-actin. Phallotoxins are poisonous when administered parenterally, but not orally because of poor absorption. The chain is Phallacidin proprotein 1 (PHA1_2) from Amanita bisporigera (Destroying angel).